Consider the following 388-residue polypeptide: Oligogalacturonate lyase (388 aa).

Its subcellular location is the periplasm. It carries out the reaction 4-(4-deoxy-alpha-D-galact-4-enuronosyl)-D-galacturonate = 2 5-dehydro-4-deoxy-D-glucuronate. It participates in glycan metabolism; pectin degradation; 2-dehydro-3-deoxy-D-gluconate from pectin: step 3/5. Functionally, involved in degradation of pectin, which causes soft-rod disease in plants. This is Oligogalacturonate lyase (ogl) from Dickeya dadantii (strain 3937) (Erwinia chrysanthemi (strain 3937)).